The primary structure comprises 281 residues: Ras-related protein Rab-40C (281 aa).

GTP contacts are provided by serine 23, glycine 26, lysine 27, and serine 46. Residues 41–49 are switch-I; it reads SPYAYSNGI. 2 residues coordinate Mg(2+): serine 46 and aspartate 69. Residues glycine 72, asparagine 126, and arginine 127 each contribute to the GTP site. Positions 72–88 are switch-II; it reads GQGRFCTIFRSYSRGAQ. One can recognise an SOCS box domain in the interval 175-228; sequence LMRHGMEKIWRPNRVFSLQDLCCRAIVSCTPVHLIDKLPLPVTIKSHLKSFSMA. Residues 245 to 281 are disordered; it reads SGAGGSGSKGNSLKRSKSIRPPQSPPQNCSRSNCKIS. The span at 270-281 shows a compositional bias: polar residues; it reads PQNCSRSNCKIS. Residue cysteine 273 is the site of S-palmitoyl cysteine attachment. The S-geranylgeranyl cysteine moiety is linked to residue cysteine 278.

Belongs to the small GTPase superfamily. Rab family. In terms of assembly, component of the cullin-5-RING E3 ubiquitin-protein ligase complex (ECS(RAB40C) complex) composed of CUL5, Elongin BC (ELOB and ELOC), RNF7/RBX2 and RAB40C. Interacts with protein phosphatase 6 (PP6) complex components ANKRD28, ANKRD52, PPP6C, PP6R1 and PP6R2; the interaction leads to ANKRD28 ubiquitination and decreased PP6 activity. Interacts with DAB2IP; DAB2IP acts as a GAP for RAB40C. It depends on Mg(2+) as a cofactor.

It is found in the cell membrane. The protein resides in the cytoplasm. It localises to the cytosol. The protein localises to the golgi apparatus membrane. The catalysed reaction is GTP + H2O = GDP + phosphate + H(+). It functions in the pathway protein modification; protein ubiquitination. Regulated by guanine nucleotide exchange factors (GEFs) which promote the exchange of bound GDP for free GTP. Regulated by GTPase activating proteins (GAPs) including DAB2IP, which increase the GTP hydrolysis activity. Inhibited by GDP dissociation inhibitors (GDIs). RAB40C small GTPase acts as substrate-recognition component of the ECS(RAB40C) E3 ubiquitin ligase complex which mediates the ubiquitination and subsequent proteasomal degradation of target proteins. The Rab40 subfamily belongs to the Rab family that are key regulators of intracellular membrane trafficking, from the formation of transport vesicles to their fusion with membranes. Rabs cycle between an inactive GDP-bound form and an active GTP-bound form that is able to recruit to membranes different sets of downstream effectors directly responsible for vesicle formation, movement, tethering and fusion. As part of the ECS(RAB40C) complex, mediates ANKRD28 ubiquitination and degradation, thereby inhibiting protein phosphatase 6 (PP6) complex activity and focal adhesion assembly during cell migration. Also negatively regulate lipid droplets accumulation in a GTP-dependent manner. The chain is Ras-related protein Rab-40C from Mus musculus (Mouse).